The chain runs to 266 residues: L-cystine-binding protein TcyJ (266 aa).

The N-terminal stretch at 1–29 (MKLAHLGRQALMGVMAVALVAGMSVKSFA) is a signal peptide.

The protein belongs to the bacterial solute-binding protein 3 family. In terms of assembly, the complex is composed of two ATP-binding proteins (TcyN), two transmembrane proteins (TcyL) and a solute-binding protein (TcyJ).

It is found in the periplasm. Its function is as follows. Part of the ABC transporter complex TcyJLN involved in L-cystine import. Binds cystine. This is L-cystine-binding protein TcyJ from Escherichia coli O6:H1 (strain CFT073 / ATCC 700928 / UPEC).